Reading from the N-terminus, the 1241-residue chain is Intraflagellar transport protein 122 homolog (1241 aa).

WD repeat units lie at residues 10–50 (KAEH…QPLK), 51–91 (GHKD…LKYT), 93–129 (NDAI…VSKH), and 131–169 (SSSK…KVKI). The interval 222–246 (VYSSQGSEAEEEEPEEEDDSPRDDN) is disordered. Residues 229-242 (EAEEEEPEEEDDSP) are compositionally biased toward acidic residues. 3 WD repeats span residues 278-317 (ALNF…LGTV), 319-359 (EQNS…HGLY), and 512-551 (KQAT…LLFQ).

Component of the IFT complex A (IFT-A) complex. IFT-A complex is divided into a core subcomplex composed of IFT122:IFT140:WDR19 which is associated with TULP3 and a peripheral subcomplex composed of IFT43:WDR35:TTC21B. Interacts with IFT43:WDR35; the interaction connects the 2 IFT-A subcomplexes. Interacts with IFTAP; the interaction associates IFTAP with IFT-A complex. In terms of tissue distribution, expressed in many tissues. Predominant expression in testis and pituitary.

The protein localises to the cell projection. It localises to the cilium. The protein resides in the cytoplasm. It is found in the cytoskeleton. Its subcellular location is the cilium basal body. Functionally, as a component of the IFT complex A (IFT-A), a complex required for retrograde ciliary transport and entry into cilia of G protein-coupled receptors (GPCRs), it is required in ciliogenesis and ciliary protein trafficking. Involved in cilia formation during neuronal patterning. Acts as a negative regulator of Shh signaling. Required to recruit TULP3 to primary cilia. The chain is Intraflagellar transport protein 122 homolog from Homo sapiens (Human).